The chain runs to 111 residues: BET1-like protein (111 aa).

Residues 1–86 are Cytoplasmic-facing; that stretch reads MADWARAQSP…MARSGRDNRK (86 aa). A phosphoserine mark is found at Ser-9 and Ser-37. The t-SNARE coiled-coil homology domain occupies 15 to 77; that stretch reads EILDRENKRM…TGSVKRFSTM (63 aa). The helical; Anchor for type IV membrane protein transmembrane segment at 87-107 threads the bilayer; that stretch reads LLCGVAVGLIVAFFILSYLLS. The Lumenal portion of the chain corresponds to 108–111; that stretch reads RART.

In terms of assembly, component of a SNARE complex consisting of STX5, YKT6, GOSR1 and BET1L. Interacts with STX5.

The protein localises to the golgi apparatus membrane. It is found in the golgi apparatus. The protein resides in the trans-Golgi network membrane. Functionally, vesicle SNARE required for targeting and fusion of retrograde transport vesicles with the Golgi complex. Required for the integrity of the Golgi complex. The protein is BET1-like protein of Bos taurus (Bovine).